The following is a 397-amino-acid chain: Elongation factor Tu (397 aa).

The 197-residue stretch at 10–206 folds into the tr-type G domain; that stretch reads KPHVNIGTIG…AVDESIPDPV (197 aa). The segment at 19 to 26 is G1; sequence GHVDHGKT. A GTP-binding site is contributed by 19-26; sequence GHVDHGKT. Residue Thr-26 coordinates Mg(2+). Residues 62-66 form a G2 region; the sequence is GITIN. Residues 83–86 form a G3 region; sequence DAPG. Residues 83 to 87 and 138 to 141 each bind GTP; these read DAPGH and NKSD. The tract at residues 138-141 is G4; sequence NKSD. Residues 176 to 178 are G5; that stretch reads SAL.

This sequence belongs to the TRAFAC class translation factor GTPase superfamily. Classic translation factor GTPase family. EF-Tu/EF-1A subfamily. In terms of assembly, monomer.

It localises to the cytoplasm. The catalysed reaction is GTP + H2O = GDP + phosphate + H(+). GTP hydrolase that promotes the GTP-dependent binding of aminoacyl-tRNA to the A-site of ribosomes during protein biosynthesis. The polypeptide is Elongation factor Tu (Mycobacteroides abscessus (strain ATCC 19977 / DSM 44196 / CCUG 20993 / CIP 104536 / JCM 13569 / NCTC 13031 / TMC 1543 / L948) (Mycobacterium abscessus)).